The primary structure comprises 473 residues: Trehalose-6-phosphate synthase (473 aa).

A D-glucose 6-phosphate-binding site is contributed by Arg10. UDP-alpha-D-glucose is bound at residue 21–22; sequence GG. The D-glucose 6-phosphate site is built by Tyr76 and Asp130. UDP-alpha-D-glucose contacts are provided by Arg262 and Lys267. Arg300 is a D-glucose 6-phosphate binding site. Residues Phe339 and 365–369 contribute to the UDP-alpha-D-glucose site; that span reads LVAKE. The segment at 454–473 is disordered; the sequence is TPRSPERQQQNNVATFPKLA.

It belongs to the glycosyltransferase 20 family. As to quaternary structure, homotetramer.

It carries out the reaction D-glucose 6-phosphate + UDP-alpha-D-glucose = alpha,alpha-trehalose 6-phosphate + UDP + H(+). It participates in glycan biosynthesis; trehalose biosynthesis. Its function is as follows. Probably involved in the osmoprotection via the biosynthesis of trehalose. Catalyzes the transfer of glucose from UDP-alpha-D-glucose (UDP-Glc) to D-glucose 6-phosphate (Glc-6-P) to form trehalose-6-phosphate. Acts with retention of the anomeric configuration of the UDP-sugar donor. In Salmonella choleraesuis (strain SC-B67), this protein is Trehalose-6-phosphate synthase.